Consider the following 255-residue polypeptide: MLTKCEGIVLRTNDYGETNKIVTLLTREHGKIGVMARGARKSASRLSAVSQPFLYGSFLMQRTSGLGTLQQGEMILSMRTIREDLFLTAYAAFIAELTDKGTEEKKPNPYLFELILESFKRLNDGTDPDVITFIVQMKMLGVMGLYPELNHCVHCKSGEGTFHFSIRDNGFICHRCFEKDPYRVPMSPQTARLLRLFYYFDIGRLGSVSLKQETKNEIKRVIDLYYEEYSGLYLKSKRFLDQMESMKNLLDENKS.

Belongs to the RecO family.

Its function is as follows. Involved in DNA repair and RecF pathway recombination. The sequence is that of DNA repair protein RecO from Bacillus velezensis (strain DSM 23117 / BGSC 10A6 / LMG 26770 / FZB42) (Bacillus amyloliquefaciens subsp. plantarum).